A 562-amino-acid chain; its full sequence is MTTTTTVKSDIEIAQEASMKKIQEIAADLNILEDELEPYGHYKGKLSLDIFKRLQNEKDGKVVLVTAINPTPAGEGKSTVTVGLGQAFNKIGKKTVIALREPSLGPTMGLKGGAAGGGFSQVVPMEDINLHFTGDIHAITTANNALAAFIDNHIQQGNTLGIDTRKIVWKRCVDLNDRALRNVVIGLGGPVQGVPREDGFDITVASEIMAVFCLATDIQDLKARLSRIVVAYNFANQPVTVKDLGVEGALTLLLKDALKPNLVQTLENTPAIIHGGPFANIAHGCNSVIATTMAAKLGDYVITEAGFGADLGAEKFLDIKARAAGIKPEAVVIVATIRALKMHGGVAKDQLKEENVDALAKGMENLQKHVETIQSFGVPFVIAINKFITDTDAEVAYLQEWCNERGYAVSLTEVWEKGGQGGVDLAEKVLKEIEKGENNYAPLYELELPLEEKIRTIAQKVYGAKDIEFAPKARKQLAQYEGEGWSNLPVCMAKTQYSLSDDATKLGRPSDFIVTIRELKPSIGAGFIVALTGTMLTMPGLPKQPAALQMDVNEDGKAVGLF.

71 to 78 (TPAGEGKS) contributes to the ATP binding site.

The protein belongs to the formate--tetrahydrofolate ligase family.

It carries out the reaction (6S)-5,6,7,8-tetrahydrofolate + formate + ATP = (6R)-10-formyltetrahydrofolate + ADP + phosphate. It functions in the pathway one-carbon metabolism; tetrahydrofolate interconversion. This Bacillus cereus (strain ATCC 10987 / NRS 248) protein is Formate--tetrahydrofolate ligase.